The primary structure comprises 657 residues: Pentatricopeptide repeat-containing protein At1g11710, mitochondrial (657 aa).

The N-terminal 74 residues, 1–74 (MFGHVFSRRT…REFRSSPKLA (74 aa)), are a transit peptide targeting the mitochondrion. PPR repeat units lie at residues 147-181 (SPDV…GFCV), 182-216 (SVHA…GYVE), 217-251 (NVNT…GVWP), 252-282 (NVVS…MGMM), 290-324 (NAVT…GVDC), 325-359 (NERT…GLVV), 360-394 (NTVI…NMQI), 395-429 (DRFT…KLVE), 430-464 (DIVC…GLSL), 465-499 (DAIS…NKTS), 500-530 (NLVI…MEIK), 531-565 (DIVT…DGEK), 568-602 (SLVT…GVVP), and 603-637 (DSIT…GVTP).

The protein belongs to the PPR family. P subfamily.

It localises to the mitochondrion. The protein is Pentatricopeptide repeat-containing protein At1g11710, mitochondrial of Arabidopsis thaliana (Mouse-ear cress).